We begin with the raw amino-acid sequence, 86 residues long: RNA-binding protein Hfq (86 aa).

Residues aspartate 12 to valine 73 enclose the Sm domain.

It belongs to the Hfq family. In terms of assembly, homohexamer.

In terms of biological role, RNA chaperone that binds small regulatory RNA (sRNAs) and mRNAs to facilitate mRNA translational regulation in response to envelope stress, environmental stress and changes in metabolite concentrations. Also binds with high specificity to tRNAs. The chain is RNA-binding protein Hfq from Thermoanaerobacter pseudethanolicus (strain ATCC 33223 / 39E) (Clostridium thermohydrosulfuricum).